A 122-amino-acid chain; its full sequence is Large ribosomal subunit protein uL14 (122 aa).

Belongs to the universal ribosomal protein uL14 family. In terms of assembly, part of the 50S ribosomal subunit. Forms a cluster with proteins L3 and L19. In the 70S ribosome, L14 and L19 interact and together make contacts with the 16S rRNA in bridges B5 and B8.

Its function is as follows. Binds to 23S rRNA. Forms part of two intersubunit bridges in the 70S ribosome. The chain is Large ribosomal subunit protein uL14 from Cyanothece sp. (strain PCC 7425 / ATCC 29141).